A 1223-amino-acid polypeptide reads, in one-letter code: RNA-binding protein 20 (1223 aa).

3 disordered regions span residues 1–59 (MVLA…QAGL), 238–288 (QAYG…PTSQ), and 306–381 (GEVG…GARR). A compositionally biased stretch (pro residues) spans 29–57 (APAPPAPPGPRGMQPPPPPPPPPPPPPQA). Composition is skewed to polar residues over residues 238 to 261 (QAYG…SGSV) and 314 to 331 (GPNS…QSKP). Residues 410 to 444 (HLPHICSICDKKVFDLKDWELHVKGKLHAQKCLLF) form a U1-type zinc finger. An RRM domain is found at 520–595 (RVVHICNLPE…EKLLIRMSKR (76 aa)). Over residues 626 to 636 (EADRYGPERPR) the composition is skewed to basic and acidic residues. Disordered stretches follow at residues 626 to 902 (EADR…TNME), 971 to 995 (EISL…DVEM), and 1042 to 1102 (MSSP…STQE). The tract at residues 630 to 657 (YGPERPRSRSPVSRSLSPRSHTPSFTSC) is RS. Residues Ser637, Ser639, Ser642, Ser644, Ser662, and Ser681 each carry the phosphoserine modification. The span at 638 to 662 (RSPVSRSLSPRSHTPSFTSCSSSHS) shows a compositional bias: low complexity. 2 stretches are compositionally biased toward basic and acidic residues: residues 676–711 (DSWE…MWAH) and 718–737 (RQVD…GYRE). The segment covering 742–752 (SGSPSSLHSVS) has biased composition (low complexity). Position 744 is a phosphoserine (Ser744). Composition is skewed to basic and acidic residues over residues 755 to 774 (KSRE…DKYL) and 786 to 852 (RKDE…KEEQ). A phosphoserine mark is found at Ser803, Ser861, Ser872, Ser887, Ser889, Ser973, Ser976, and Ser1044. A compositionally biased stretch (basic and acidic residues) spans 864-884 (RQEKETESSDAENTRTRKEQD). Residues 1083-1102 (STPTETDLQSQACQGVSTQE) show a composition bias toward polar residues. Ser1111 and Ser1116 each carry phosphoserine. Residues 1157-1188 (FYCKLCGLFYTSEEMAKMSHCRSAVHYRNLQK) form a Matrin-type zinc finger. Residues 1197–1223 (GLKETEGAGSPRPEDSGIVPHFERKKL) are disordered. Ser1206 carries the post-translational modification Phosphoserine.

Associates with components of the U1 and U2 U1 small nuclear ribonucleoprotein complexes. Post-translationally, phosphorylation regulates the subcellular localization. Phosphorylation of Ser-637 and Ser-639 in the RS (arginine/serine-rich) region promotes nuclear localization of the protein. In contrast, phosphorylation of the C-terminal disordered region promotes localization to cytoplasmic ribonucleoprotein granules.

It is found in the nucleus. It localises to the cytoplasm. Its subcellular location is the cytoplasmic ribonucleoprotein granule. In terms of biological role, RNA-binding protein that acts as a regulator of mRNA splicing of a subset of genes encoding key structural proteins involved in cardiac development, such as TTN (Titin), CACNA1C, CAMK2D or PDLIM5/ENH. Acts as a repressor of mRNA splicing: specifically binds the 5'UCUU-3' motif that is predominantly found within intronic sequences of pre-mRNAs, leading to the exclusion of specific exons in target transcripts. RBM20-mediated exon skipping is hormone-dependent and is essential for TTN isoform transition in both cardiac and skeletal muscles. RBM20-mediated exon skipping of TTN provides substrates for the formation of circular RNA (circRNAs) from the TTN transcripts. Together with RBM24, promotes the expression of short isoforms of PDLIM5/ENH in cardiomyocytes. The sequence is that of RNA-binding protein 20 from Sus scrofa (Pig).